The sequence spans 2471 residues: Neurogenic locus notch homolog protein 2 (2471 aa).

Positions 1-25 (MPALRPALLWALLALWLCCAAPAHA) are cleaved as a signal peptide. EGF-like domains are found at residues 26 to 63 (LQCR…EYCQ), 64 to 102 (HRDP…EDCQ), 105 to 143 (TSHP…KECQ), and 144 to 180 (WTDA…QKCE). The Extracellular portion of the chain corresponds to 26 to 1677 (LQCRDGYEPC…SESLTPERTQ (1652 aa)). Disulfide bonds link C28–C41, C35–C51, C53–C62, C68–C79, C73–C90, C92–C101, C109–C121, C115–C131, C133–C142, C148–C159, C153–C168, C170–C179, C186–C198, C192–C207, C209–C218, C225–C236, C230–C246, C248–C257, C264–C275, C269–C284, C286–C295, C302–C315, C309–C324, C326–C335, C342–C353, C347–C362, C364–C373, C379–C390, C384–C401, C403–C412, C419–C433, C427–C442, C444–C453, C460–C471, C465–C480, C482–C491, C498–C509, C503–C518, C520–C529, C536–C547, C541–C556, C558–C567, C574–C584, C579–C593, C595–C604, C611–C622, C616–C631, C633–C642, C649–C659, C654–C668, C670–C679, C686–C697, C691–C706, C708–C717, C724–C734, C729–C743, C745–C754, C761–C772, C766–C781, C783–C792, C799–C810, C804–C819, C821–C830, C837–C848, C842–C859, C861–C870, C877–C888, C882–C897, C899–C908, C915–C926, C920–C935, C937–C946, C953–C964, C958–C973, C975–C984, C991–C1002, C996–C1011, C1013–C1022, C1029–C1040, C1034–C1049, C1051–C1060, C1067–C1078, C1072–C1087, and C1089–C1098. N-linked (GlcNAc...) asparagine glycosylation occurs at N46. An N-linked (GlcNAc...) asparagine glycan is attached at N155. Positions 182–219 (DVNECDIPGHCQHGGTCLNLPGSYQCQCPQGFTGQYCD) constitute an EGF-like 5; calcium-binding domain. Residues 221 to 258 (LYVPCAPSPCVNGGTCRQTGDFTFECNCLPGFEGSTCE) form the EGF-like 6 domain. Residues 260–296 (NIDDCPNHRCQNGGVCVDGVNTYNCRCPPQWTGQFCT) enclose the EGF-like 7; calcium-binding domain. Residues 298-336 (DVDECLLQPNACQNGGTCANRNGGYGCVCVNGWSGDDCS) enclose the EGF-like 8; calcium-binding domain. The 37-residue stretch at 338–374 (NIDDCAFASCTPGSTCIDRVASFSCMCPEGKAGLLCH) folds into the EGF-like 9; calcium-binding domain. Positions 375–413 (LDDACISNPCHKGALCDTNPLNGQYICTCPQGYKGADCT) constitute an EGF-like 10 domain. The region spanning 415–454 (DVDECAMANSNPCEHAGKCVNTDGAFHCECLKGYAGPRCE) is the EGF-like 11; calcium-binding domain. An EGF-like 12; calcium-binding domain is found at 456–492 (DINECHSDPCQNDATCLDKIGGFTCLCMPGFKGVHCE). Positions 494–530 (EINECQSNPCVNNGQCVDKVNRFQCLCPPGFTGPVCQ) constitute an EGF-like 13; calcium-binding domain. An EGF-like 14; calcium-binding domain is found at 532-568 (DIDDCSSTPCLNGAKCIDHPNGYECQCATGFTGVLCE). The 36-residue stretch at 570–605 (NIDNCDPDPCHHGQCQDGIDSYTCICNPGYMGAICS) folds into the EGF-like 15; calcium-binding domain. The EGF-like 16; calcium-binding domain occupies 607 to 643 (QIDECYSSPCLNDGRCIDLVNGYQCNCQPGTSGVNCE). Residue S613 is glycosylated (O-linked (Glc...) serine; alternate). A glycan (O-linked (Xyl...) serine; alternate) is linked at S613. The region spanning 645-680 (NFDDCASNPCIHGICMDGINRYSCVCSPGFTGQRCN) is the EGF-like 17; calcium-binding domain. The EGF-like 18; calcium-binding domain occupies 682-718 (DIDECASNPCRKGATCINGVNGFRCICPEGPHHPSCY). The region spanning 720–755 (QVNECLSNPCIHGNCTGGLSGYKCLCDAGWVGINCE) is the EGF-like 19 domain. N733 is a glycosylation site (N-linked (GlcNAc...) asparagine). The EGF-like 20; calcium-binding domain occupies 757–793 (DKNECLSNPCQNGGTCDNLVNGYRCTCKKGFKGYNCQ). In terms of domain architecture, EGF-like 21; calcium-binding spans 795–831 (NIDECASNPCLNQGTCFDDISGYTCHCVLPYTGKNCQ). Residues 833-871 (VLAPCSPNPCENAAVCKESPNFESYTCLCAPGWQGQRCT) form the EGF-like 22 domain. The EGF-like 23; calcium-binding domain maps to 873–909 (DIDECISKPCMNHGLCHNTQGSYMCECPPGFSGMDCE). Residues 911–947 (DIDDCLANPCQNGGSCMDGVNTFSCLCLPGFTGDKCQ) enclose the EGF-like 24; calcium-binding domain. The EGF-like 25; calcium-binding domain maps to 949–985 (DMNECLSEPCKNGGTCSDYVNSYTCKCQAGFDGVHCE). The EGF-like 26; calcium-binding domain maps to 987 to 1023 (NINECTESSCFNGGTCVDGINSFSCLCPVGFTGSFCL). One can recognise an EGF-like 27; calcium-binding domain in the interval 1025–1061 (EINECSSHPCLNEGTCVDGLGTYRCSCPLGYTGKNCQ). EGF-like domains lie at 1063 to 1099 (LVNL…AYCD) and 1101 to 1147 (PNVS…SYCE). Residue N1102 is glycosylated (N-linked (GlcNAc...) asparagine). Intrachain disulfides connect C1105–C1126, C1120–C1135, C1137–C1146, C1153–C1164, C1158–C1173, C1175–C1184, C1191–C1202, C1196–C1211, C1213–C1222, C1229–C1241, C1235–C1250, C1252–C1261, C1268–C1281, C1273–C1290, C1292–C1301, C1308–C1319, C1313–C1331, C1333–C1342, C1378–C1389, C1383–C1400, C1402–C1411, C1425–C1448, C1430–C1443, and C1439–C1455. The region spanning 1149-1185 (QLDECASNPCQHGATCSDFIGGYRCECVPGYQGVNCE) is the EGF-like 30; calcium-binding domain. Residues 1187–1223 (EVDECQNQPCQNGGTCIDLVNHFKCSCPPGTRGLLCE) form the EGF-like 31; calcium-binding domain. The region spanning 1225–1262 (NIDDCARGPHCLNGGQCMDRIGGYSCRCLPGFAGERCE) is the EGF-like 32; calcium-binding domain. 3 EGF-like domains span residues 1264–1302 (DINE…RHCE), 1304–1343 (FVDV…ARCQ), and 1374–1412 (CESG…SRCE). LNR repeat units lie at residues 1425 to 1465 (CLSQ…PWAN), 1466 to 1502 (CSSP…NSKT), and 1503 to 1544 (CKYD…NLAE). The negative regulatory region (NRR) stretch occupies residues 1425 to 1677 (CLSQYCADKA…SESLTPERTQ (253 aa)). N1465 carries N-linked (GlcNAc...) asparagine glycosylation. Intrachain disulfides connect C1466-C1489, C1472-C1484, C1480-C1496, C1503-C1527, C1509-C1522, C1518-C1534, and C1632-C1639. The helical transmembrane segment at 1678–1698 (LLYLLAVAVVIILFIILLGVI) threads the bilayer. Residues 1699–2471 (MAKRKRKHGS…PPHNNMQVYA (773 aa)) lie on the Cytoplasmic side of the membrane. The residue at position 1716 (T1716) is a Phosphothreonine. The segment at 1754 to 1788 (TSEHWVDDEGPQPKKVKAEDEALLSEEDDPIDRRP) is disordered. Residues 1774-1783 (EALLSEEDDP) show a composition bias toward acidic residues. S1778 carries the phosphoserine modification. Position 1802 is a phosphothreonine (T1802). Position 1804 is a phosphoserine (S1804). The residue at position 1808 (T1808) is a Phosphothreonine. ANK repeat units lie at residues 1827-1871 (DGCT…SLQA), 1876-1905 (TGEM…DANA), 1909-1939 (MGRC…DLDA), 1943-1972 (DGTT…DVNA), 1976-2005 (HGKS…NRDM), and 2009-2038 (KEET…NRDI). A phosphoserine mark is found at S1842 and S1845. A phosphoserine mark is found at S2070, S2078, and S2081. 2 disordered regions span residues 2091 to 2168 (FLSL…TSSP) and 2380 to 2471 (VGKY…QVYA). At T2097 the chain carries Phosphothreonine. A compositionally biased stretch (basic residues) spans 2098–2107 (PMGKKSRRPS). Polar residues-rich tracts occupy residues 2108-2117 (AKSTMPTSLP), 2137-2150 (EKVQ…TLSP), 2159-2168 (TYVSDTTSSP), and 2388-2406 (SQHS…SHSG). The span at 2417-2445 (PSPESPDQWSSSSPHSASDWSDVTTSPTP) shows a compositional bias: low complexity.

The protein belongs to the NOTCH family. In terms of assembly, heterodimer of a C-terminal fragment N(TM) and an N-terminal fragment N(EC) which are probably linked by disulfide bonds. Interacts with MAML1, MAML2 and MAML3 which act as transcriptional coactivators for NOTCH2. Interacts with RELA/p65. Interacts with HIF1AN. Interacts (via ANK repeats) with TCIM, the interaction inhibits the nuclear translocation of NOTCH2 N2ICD. Interacts with CUL1, RBX1, SKP1 and FBXW7 that are SCF(FBXW7) E3 ubiquitin-protein ligase complex components. Interacts with MINAR1; this interaction increases MINAR1 stability and function. Interacts with NOTCH2NL (NOTCH2NLA, NOTCH2NLB and/or NOTCH2NLC); leading to enhance Notch signaling pathway in a non-cell-autonomous manner. Interacts with MDK; this interaction mediates a nuclear accumulation of NOTCH2 and therefore activation of NOTCH2 signaling leading to interaction between HES1 and STAT3. Interacts with MINAR2. In terms of processing, synthesized in the endoplasmic reticulum as an inactive form which is proteolytically cleaved by a furin-like convertase in the trans-Golgi network before it reaches the plasma membrane to yield an active, ligand-accessible form. Cleavage results in a C-terminal fragment N(TM) and a N-terminal fragment N(EC). Following ligand binding, it is cleaved by TNF-alpha converting enzyme (TACE) to yield a membrane-associated intermediate fragment called notch extracellular truncation (NEXT). This fragment is then cleaved by presenilin dependent gamma-secretase to release a notch-derived peptide containing the intracellular domain (NICD) from the membrane. Post-translationally, hydroxylated by HIF1AN. Can be either O-glucosylated or O-xylosylated at Ser-613 by POGLUT1. In terms of processing, phosphorylated by GSK3. GSK3-mediated phosphorylation is necessary for NOTCH2 recognition by FBXW7, ubiquitination and degradation via the ubiquitin proteasome pathway. Expressed in the brain, heart, kidney, lung, skeletal muscle and liver. Ubiquitously expressed in the embryo.

The protein localises to the cell membrane. It is found in the nucleus. Its subcellular location is the cytoplasm. In terms of biological role, functions as a receptor for membrane-bound ligands Jagged-1 (JAG1), Jagged-2 (JAG2) and Delta-1 (DLL1) to regulate cell-fate determination. Upon ligand activation through the released notch intracellular domain (NICD) it forms a transcriptional activator complex with RBPJ/RBPSUH and activates genes of the enhancer of split locus. Affects the implementation of differentiation, proliferation and apoptotic programs. Involved in bone remodeling and homeostasis. In collaboration with RELA/p65 enhances NFATc1 promoter activity and positively regulates RANKL-induced osteoclast differentiation. Positively regulates self-renewal of liver cancer cells. The sequence is that of Neurogenic locus notch homolog protein 2 from Homo sapiens (Human).